A 563-amino-acid chain; its full sequence is Light-independent protochlorophyllide reductase subunit B (563 aa).

Aspartate 36 contacts [4Fe-4S] cluster. The active-site Proton donor is the aspartate 293. 437–438 contacts substrate; it reads GM. The segment at 459–478 is disordered; it reads ERREAEFGNQKVETGEPGTG.

Belongs to the ChlB/BchB/BchZ family. In terms of assembly, protochlorophyllide reductase is composed of three subunits; BchL, BchN and BchB. Forms a heterotetramer of two BchB and two BchN subunits. Requires [4Fe-4S] cluster as cofactor.

It carries out the reaction chlorophyllide a + oxidized 2[4Fe-4S]-[ferredoxin] + 2 ADP + 2 phosphate = protochlorophyllide a + reduced 2[4Fe-4S]-[ferredoxin] + 2 ATP + 2 H2O. The protein operates within porphyrin-containing compound metabolism; bacteriochlorophyll biosynthesis (light-independent). Functionally, component of the dark-operative protochlorophyllide reductase (DPOR) that uses Mg-ATP and reduced ferredoxin to reduce ring D of protochlorophyllide (Pchlide) to form chlorophyllide a (Chlide). This reaction is light-independent. The NB-protein (BchN-BchB) is the catalytic component of the complex. This Roseiflexus castenholzii (strain DSM 13941 / HLO8) protein is Light-independent protochlorophyllide reductase subunit B.